We begin with the raw amino-acid sequence, 363 residues long: MLKQTPLFDLHRDMGGKLVDFGGWNMPVNYGSQIEEHHAVRNGAGMFDVSHMTVVDIQGTGARDFLRYLLANDVDRLKLPGKALYTGMLNESGGVIDDLIVYLMVNGYRLVVNCATREKDLAWINSQAEAYDVTVIERPELAMIAVQGPLARGKVHDLIGAAVLEELKIFQGVPLSGEGYADWFVARTGYTGEDGYEIILPAEAAVQLWQDLARIGVTPCGLGARDTLRLEAGMNLYGHEMDDDTSPLVANMAWTVAWEPAERNFIGREALTAEKSAGISHKLVGLVYTGKGVLRAEQEVTAPGVDGVGVITSGTFSPTLGYSIALARVPVGFTDQAVVNVRNRQLEVKIISPCFVRSGNKVF.

This sequence belongs to the GcvT family. In terms of assembly, the glycine cleavage system is composed of four proteins: P, T, L and H.

It carries out the reaction N(6)-[(R)-S(8)-aminomethyldihydrolipoyl]-L-lysyl-[protein] + (6S)-5,6,7,8-tetrahydrofolate = N(6)-[(R)-dihydrolipoyl]-L-lysyl-[protein] + (6R)-5,10-methylene-5,6,7,8-tetrahydrofolate + NH4(+). Functionally, the glycine cleavage system catalyzes the degradation of glycine. The sequence is that of Aminomethyltransferase from Teredinibacter turnerae (strain ATCC 39867 / T7901).